Consider the following 252-residue polypeptide: Coenzyme F420:L-glutamate ligase (252 aa).

Residues 11-14, 45-46, and lysine 50 contribute to the GTP site; these read MPLV and ET. Aspartate 115 serves as a coordination point for a divalent metal cation. Asparagine 118 is a GTP binding site. 3 residues coordinate a divalent metal cation: aspartate 156, threonine 157, and glutamine 214. Residue 212-219 coordinates GTP; the sequence is MGQADEGV.

Belongs to the CofE family. As to quaternary structure, homodimer. Mg(2+) is required as a cofactor. Requires Mn(2+) as cofactor. It depends on K(+) as a cofactor.

The catalysed reaction is oxidized coenzyme F420-0 + GTP + L-glutamate = oxidized coenzyme F420-1 + GDP + phosphate + H(+). The enzyme catalyses oxidized coenzyme F420-1 + GTP + L-glutamate = oxidized coenzyme F420-2 + GDP + phosphate + H(+). The protein operates within cofactor biosynthesis; coenzyme F420 biosynthesis. In terms of biological role, catalyzes the GTP-dependent successive addition of two or more gamma-linked L-glutamates to the L-lactyl phosphodiester of 7,8-didemethyl-8-hydroxy-5-deazariboflavin (F420-0) to form coenzyme F420-0-glutamyl-glutamate (F420-2) or polyglutamated F420 derivatives. In Methanothermobacter thermautotrophicus (strain ATCC 29096 / DSM 1053 / JCM 10044 / NBRC 100330 / Delta H) (Methanobacterium thermoautotrophicum), this protein is Coenzyme F420:L-glutamate ligase.